Here is a 393-residue protein sequence, read N- to C-terminus: Probable chromate transport protein (393 aa).

10 helical membrane-spanning segments follow: residues 22-42, 90-110, 119-139, 146-166, 201-221, 231-251, 261-281, 282-302, 327-347, and 370-390; these read YFLK…GYMH, ALVG…LGWA, WMQA…AISA, TVGT…TTIV, FIGL…TSLL, AGAF…GGVV, QFLD…ITTG, FIGF…AMFI, FVNG…VVLG, and LGKK…GVIF.

It belongs to the chromate ion transporter (CHR) (TC 2.A.51) family.

It is found in the cell membrane. Functionally, may function in the active transport of chromate into the cell under sulfur-deficient conditions. This chain is Probable chromate transport protein (srpC), found in Synechococcus elongatus (strain ATCC 33912 / PCC 7942 / FACHB-805) (Anacystis nidulans R2).